Consider the following 271-residue polypeptide: Purine nucleoside phosphorylase 1 (271 aa).

Phosphate is bound by residues S28, H59, 79 to 81, and A111; that span reads RFH. Residue S28 is modified to Phosphoserine. Residue E191 participates in a purine D-ribonucleoside binding. Position 210 (S210) interacts with phosphate. A purine D-ribonucleoside is bound at residue N233.

It belongs to the PNP/MTAP phosphorylase family. Homotrimer.

The enzyme catalyses a purine 2'-deoxy-D-ribonucleoside + phosphate = a purine nucleobase + 2-deoxy-alpha-D-ribose 1-phosphate. It participates in purine metabolism; purine nucleoside salvage. The purine nucleoside phosphorylases catalyze the phosphorolytic breakdown of the N-glycosidic bond in the beta-(deoxy)ribonucleoside molecules, with the formation of the corresponding free purine bases and pentose-1-phosphate. Cleaves guanosine, inosine, 2'-deoxyguanosine and 2'-deoxyinosine. The chain is Purine nucleoside phosphorylase 1 (punA) from Bacillus subtilis (strain 168).